Here is a 1220-residue protein sequence, read N- to C-terminus: MNHIYKLKSYGIGTDRRFYGVANKTLETPDFLDPVRESFDWFLHVGIPEAFDRIFPIVSANGKLEISFRRGSLRVEKPENEYLAIREAKIKGKTYSARVYVTLVKVHSEDGEMEEQEILLAEFPFMTQGGTFIINGFEKVVVSQLIRSPGVCFRENVRNQQADDLFNKVEIIPQLGSWMEIFHKVTGNQVDTVKFRIDKHKNIPLLSFLRAIGFTNETVRKYFGNSPELLESIRRHKLESLEENLELIYRIVRKDDRITEEGLKNLIPSIIFNERRYNLASTGRFMLNAKLNLVERISQTYLAEDLVSKKNKILFKKGTYITRQLALEIQEKFNNEEIPLSEIEGVDSTIYARQLEITRNENLWKRFYVAIVKVWPNKKSMLQESEPVNVIATDPNLNEKTLVLSDIIAIVSYYFNLLSNLGKSDDPDSLVNKRIVSVGELLQNQFLIALTKIEKNSKEKISTKSDLSQLTVKSIINNKPIYNQFKNFFNSSKLSQFMDQINPLGEMASKRKVTSLGPGGLNRDTAQFEVRDVHTTHYGRICPVETPEGQNIGLILNFSVFSRINQYGFIITPYYQVKNRIVDYSKVHWLAASEEFDKSFAQSGVEIDQNNRIIPDKLTVRKNQTYLVLDAEQVNYIDVSSMQMTSISASAIPFLENNDANRALMGSNMQRQAVPLIKSEAPLVATGIEEAVARFSATNLRASISGKVTYVDAKKIIIDDGEKPEIHYLRYFEKSNQETLILQKPTVKVGDKVKKGQLICDGPSTDNGELALGKNVLVAFSTWYGYNYEDAIIISEKLVKDDVFTSIHIQEQTIKFRSTKAGNDILTAEIPNASAKSRLHLDANGIVIVGSEVDTGDILVGRTSPKGEDNPTAEEKLMAAIWGKKALAQKDTSLRVKNGEGGTVIDVQILSRDQGDNLEEGVGMLIKILIAQKRKIKVGDKMAGRHGNKGVVSVILPVEDMPFLEDGTPVDIVLNPQGVPSRMNIGQVLELHLGMVAKKLKTKFVTPVFDGIKIETIKKLFDEANIPESGKFKLFDGISGQAFENPVSVGYMYMLKLLHMVDDKMHARSIGPYSLTTQQPLGGKSQNGGQRFGEMETWALESFGATSVLSELLTYKSDNIQGRNLLYNNIISGGKIPSPGTPESFNVLAYELRGLLIKLEVHKNDQENQEVEEIKDPLELPEIPSNFIDEYNQDGRIELNKLEEFADFDEENIDFDKLTR.

The protein belongs to the RNA polymerase beta chain family. In terms of assembly, the RNAP catalytic core consists of 2 alpha, 1 beta, 1 beta' and 1 omega subunit. When a sigma factor is associated with the core the holoenzyme is formed, which can initiate transcription.

It catalyses the reaction RNA(n) + a ribonucleoside 5'-triphosphate = RNA(n+1) + diphosphate. Its function is as follows. DNA-dependent RNA polymerase catalyzes the transcription of DNA into RNA using the four ribonucleoside triphosphates as substrates. The protein is DNA-directed RNA polymerase subunit beta of Mesomycoplasma hyopneumoniae (strain 7448) (Mycoplasma hyopneumoniae).